Here is a 123-residue protein sequence, read N- to C-terminus: Large ribosomal subunit protein bL12 (123 aa).

The disordered stretch occupies residues Asn96 to Lys123. The segment covering Gly100–Glu114 has biased composition (basic and acidic residues).

This sequence belongs to the bacterial ribosomal protein bL12 family. Homodimer. Part of the ribosomal stalk of the 50S ribosomal subunit. Forms a multimeric L10(L12)X complex, where L10 forms an elongated spine to which 2 to 4 L12 dimers bind in a sequential fashion. Binds GTP-bound translation factors.

Forms part of the ribosomal stalk which helps the ribosome interact with GTP-bound translation factors. Is thus essential for accurate translation. The protein is Large ribosomal subunit protein bL12 of Flavobacterium johnsoniae (strain ATCC 17061 / DSM 2064 / JCM 8514 / BCRC 14874 / CCUG 350202 / NBRC 14942 / NCIMB 11054 / UW101) (Cytophaga johnsonae).